The following is a 359-amino-acid chain: 3-dehydroquinate synthase (359 aa).

Residues 71 to 76, 105 to 109, 129 to 130, K142, K151, and 169 to 172 contribute to the NAD(+) site; these read DGEQYK, GVIGD, TT, and CLAT. Zn(2+)-binding residues include E184, H247, and H264.

This sequence belongs to the sugar phosphate cyclases superfamily. Dehydroquinate synthase family. Co(2+) serves as cofactor. Zn(2+) is required as a cofactor. Requires NAD(+) as cofactor.

It localises to the cytoplasm. The enzyme catalyses 7-phospho-2-dehydro-3-deoxy-D-arabino-heptonate = 3-dehydroquinate + phosphate. Its pathway is metabolic intermediate biosynthesis; chorismate biosynthesis; chorismate from D-erythrose 4-phosphate and phosphoenolpyruvate: step 2/7. Functionally, catalyzes the conversion of 3-deoxy-D-arabino-heptulosonate 7-phosphate (DAHP) to dehydroquinate (DHQ). In Baumannia cicadellinicola subsp. Homalodisca coagulata, this protein is 3-dehydroquinate synthase.